The primary structure comprises 1395 residues: Adventurous-gliding motility protein Z (1395 aa).

The Response regulatory domain occupies 4 to 122; it reads RVLIVESEHD…ELAALSHGIV (119 aa). Aspartate 48 bears the 4-aspartylphosphate mark. 6 disordered regions span residues 137-172, 874-893, 919-947, 1212-1249, 1287-1312, and 1326-1395; these read LNGTREAPPPMPPSLKAAAGGPPKLPKRERRSAMTE, AAESSAHIGDLTSERDGLRS, EQHAHQESRKAAASTQTTLEGQLAEARAH, AAESKAHEASTRLAAAQKERKDLEARHAKEQEDLAAKQ, RYKSKSATTATPAKAAAKPAAAEDDE, and AAAA…ELDK. A coiled-coil region spans residues 213-911; the sequence is EGKIQILRDE…LEQTHGQLAA (699 aa). Basic and acidic residues-rich tracts occupy residues 919-928 and 1228-1249; these read EQHAHQESRK and QKERKDLEARHAKEQEDLAAKQ. 2 stretches are compositionally biased toward low complexity: residues 1291 to 1306 and 1326 to 1352; these read KSATTATPAKAAAKPA and AAAAQAPAPAKKPAAKPAAQAPAKKAP. The segment covering 1382 to 1395 has biased composition (acidic residues); it reads EDDDWTALVDELDK.

As to quaternary structure, interacts with MglA.

It localises to the cytoplasm. In terms of biological role, required for adventurous-gliding motility (A motility), in response to environmental signals sensed by the frz chemosensory system. Forms ordered clusters that span the cell length and that remain stationary relative to the surface across which the cells move, serving as anchor points (focal, transient adhesion sites) that allow the bacterium to move forward. Clusters disassemble at the lagging cell pole. The protein is Adventurous-gliding motility protein Z (aglZ) of Myxococcus xanthus (strain DK1622).